The sequence spans 402 residues: Multidrug resistance protein MdtH (402 aa).

The Cytoplasmic portion of the chain corresponds to 1 to 12 (MSRVSQARNLGK). Residues 13 to 33 (YFLLIDNMLVVLGFFVVFPLI) traverse the membrane as a helical segment. Residues 34–98 (SIRFVDQMGW…GFATMGIAHE (65 aa)) are Periplasmic-facing. Residues 99–116 (PWLLWFSCFLSGLGGTLF) form a helical membrane-spanning segment. Topologically, residues 117 to 138 (DPPRSALVVKLIRPEQRGRFFS) are cytoplasmic. A helical transmembrane segment spans residues 139–159 (LLMMQDSAGAVIGALLGSWLL). The Periplasmic portion of the chain corresponds to 160–164 (QYDFR). A helical transmembrane segment spans residues 165–185 (LVCATGAILFILCALFNAWLL). Topologically, residues 186-213 (PAWKLSTARTPVREGMRRVMSNKRFVTY) are cytoplasmic. The chain crosses the membrane as a helical span at residues 214–234 (VLTLAGYYMLAVQVMLMLPIM). Over 235–243 (VNDIAGSPA) the chain is Periplasmic. The chain crosses the membrane as a helical span at residues 244 to 264 (AVKWMYAIEACLSLTLLYPIA). Residues 265-276 (RWSEKRFRLEHR) are Cytoplasmic-facing. Residues 277-297 (LMAGLLVMSLSMLPIGMVGNL) form a helical membrane-spanning segment. At 298-299 (QQ) the chain is on the periplasmic side. Residues 300 to 320 (LFTLICAFYIGSVIAEPARET) form a helical membrane-spanning segment. At 321–339 (LSASPADARARGSYMGFSR) the chain is on the cytoplasmic side. A helical membrane pass occupies residues 340–360 (LGLAIGGAISYIGGGWLFDMG). Topologically, residues 361 to 367 (KALAQPE) are periplasmic. Residues 368–388 (LPWMMLGIIGFITFLALGWQF) traverse the membrane as a helical segment. Residues 389 to 402 (SHKRTPRRMLEPGA) lie on the Cytoplasmic side of the membrane.

Belongs to the major facilitator superfamily. DHA1 family. MdtH (TC 2.A.1.2.21) subfamily.

The protein localises to the cell inner membrane. This chain is Multidrug resistance protein MdtH, found in Salmonella typhi.